The primary structure comprises 75 residues: MTEKLIEQLEARINDLECQVAFQEQTIEDLNSALSQQQLQITKMQDQMKYVVGKVKNMDSSNMEDPANEPPPPHY.

Residues 56–75 (KNMDSSNMEDPANEPPPPHY) form a disordered region.

It belongs to the SlyX family.

The protein is Protein SlyX homolog of Vibrio parahaemolyticus serotype O3:K6 (strain RIMD 2210633).